Reading from the N-terminus, the 216-residue chain is Somatotropin (216 aa).

The first 25 residues, 1–25 (MAPGSWFSPLLIAVVTLGLPQGAAA), serve as a signal peptide directing secretion. H45 contributes to the Zn(2+) binding site. A disulfide bridge connects residues C78 and C189. Residue E198 coordinates Zn(2+). C206 and C214 are disulfide-bonded.

Belongs to the somatotropin/prolactin family. As to expression, pituitary gland.

It is found in the secreted. Functionally, growth hormone plays an important role in growth control. The polypeptide is Somatotropin (GH) (Meleagris gallopavo (Wild turkey)).